The sequence spans 474 residues: ATP synthase subunit beta 2 (474 aa).

ATP is bound at residue 157–164 (GGAGVGKT).

This sequence belongs to the ATPase alpha/beta chains family. As to quaternary structure, F-type ATPases have 2 components, CF(1) - the catalytic core - and CF(0) - the membrane proton channel. CF(1) has five subunits: alpha(3), beta(3), gamma(1), delta(1), epsilon(1). CF(0) has three main subunits: a(1), b(2) and c(9-12). The alpha and beta chains form an alternating ring which encloses part of the gamma chain. CF(1) is attached to CF(0) by a central stalk formed by the gamma and epsilon chains, while a peripheral stalk is formed by the delta and b chains.

Its subcellular location is the cell inner membrane. It carries out the reaction ATP + H2O + 4 H(+)(in) = ADP + phosphate + 5 H(+)(out). Produces ATP from ADP in the presence of a proton gradient across the membrane. The catalytic sites are hosted primarily by the beta subunits. The chain is ATP synthase subunit beta 2 from Polaromonas naphthalenivorans (strain CJ2).